The chain runs to 193 residues: dCTP deaminase (193 aa).

DCTP is bound by residues 110–115 (RSSLAR), aspartate 128, 136–138 (VLE), tyrosine 171, lysine 178, and glutamine 182. Residue glutamate 138 is the Proton donor/acceptor of the active site.

The protein belongs to the dCTP deaminase family. As to quaternary structure, homotrimer.

It carries out the reaction dCTP + H2O + H(+) = dUTP + NH4(+). The protein operates within pyrimidine metabolism; dUMP biosynthesis; dUMP from dCTP (dUTP route): step 1/2. Its function is as follows. Catalyzes the deamination of dCTP to dUTP. This is dCTP deaminase from Buchnera aphidicola subsp. Acyrthosiphon pisum (strain APS) (Acyrthosiphon pisum symbiotic bacterium).